The sequence spans 460 residues: Light-independent protochlorophyllide reductase subunit N (460 aa).

[4Fe-4S] cluster-binding residues include Cys-22, Cys-47, and Cys-107.

It belongs to the BchN/ChlN family. In terms of assembly, protochlorophyllide reductase is composed of three subunits; ChlL, ChlN and ChlB. Forms a heterotetramer of two ChlB and two ChlN subunits. [4Fe-4S] cluster serves as cofactor.

It carries out the reaction chlorophyllide a + oxidized 2[4Fe-4S]-[ferredoxin] + 2 ADP + 2 phosphate = protochlorophyllide a + reduced 2[4Fe-4S]-[ferredoxin] + 2 ATP + 2 H2O. The protein operates within porphyrin-containing compound metabolism; chlorophyll biosynthesis (light-independent). Functionally, component of the dark-operative protochlorophyllide reductase (DPOR) that uses Mg-ATP and reduced ferredoxin to reduce ring D of protochlorophyllide (Pchlide) to form chlorophyllide a (Chlide). This reaction is light-independent. The NB-protein (ChlN-ChlB) is the catalytic component of the complex. In Thermosynechococcus vestitus (strain NIES-2133 / IAM M-273 / BP-1), this protein is Light-independent protochlorophyllide reductase subunit N.